Reading from the N-terminus, the 876-residue chain is MQRLSSASVRQMFIDFFKEKGHSVEPSASLVPFEDPSLLWINSGVATLKKYFDGRVIPENPRIVNAQKSIRTNDIENVGKTARHHTFFEMLGNFSIGDYFKEQAIEWAWEFLTDKKWIGFPQERLSVTVHPEDEEAYRYWHQHIGLPEERIIRLEGNFWDIGEGPSGPNSEIFYDRGPEYGDDPNDPELYPGGENERYLEIWNLVFSQFNHNADGTYTPLPKKNIDTGMGLERMVSVIQDTPTNFETDLFMPIIEATEALASTTYKEADTAFKVIADHIRTVAFAVGDGALPSNEGRGYVLRRLLRRAVRFAKSIGIDRPFMYELVPVVGAIMKDFYPEVADKQDFIARVIRTEEERFHETLNEGLAILSDIIEKAKATNKETIAGEDAFRLYDTYGFPIDLTEEYVHDEGLTVDRAGFDQEMEQQRQRARAARQESASMSVQEDVFGEVKTPSVFVGYEHTETDAVITTLVRGKEKVEQAVQGDVIQFFLDETPFYAESGGQVADRGMIVTDTGQAVVKDVKKAPNGQHLHTAEVTIGEISTGQQASARIEVRERLDIVKNHTATHLLHQALKDVLGEHVNQAGSLVSSERLRFDFSHFGQVTPNELQQIEEIVNEKVWQALPVDISIQRLEEAKAAGAMALFGEKYGSEVRVVRVGDYSLELCGGCHVRNTAEIGLFKITSESGIGAGVRRIEAVTSKGAYQFLSEQTAILKDAAERLKAKRLSDVPQRIESLQEELRKAQRENESLTAKLGQAEAGNLNDQVKEIGGVAVIAAQVDAKDTEALRSMVDTLKQAHEKAVIVLAAKTGNKLAFVAGVTKPAIAEGFHAGKLIKEVAARTGGGGGGRPDMAQAGGKDPAKLDEALAYVHEYVKSIS.

Zn(2+) contacts are provided by His-563, His-567, Cys-665, and His-669.

The protein belongs to the class-II aminoacyl-tRNA synthetase family. Zn(2+) is required as a cofactor.

It localises to the cytoplasm. It carries out the reaction tRNA(Ala) + L-alanine + ATP = L-alanyl-tRNA(Ala) + AMP + diphosphate. Its function is as follows. Catalyzes the attachment of alanine to tRNA(Ala) in a two-step reaction: alanine is first activated by ATP to form Ala-AMP and then transferred to the acceptor end of tRNA(Ala). Also edits incorrectly charged Ser-tRNA(Ala) and Gly-tRNA(Ala) via its editing domain. This Shouchella clausii (strain KSM-K16) (Alkalihalobacillus clausii) protein is Alanine--tRNA ligase.